Reading from the N-terminus, the 425-residue chain is Histidine--tRNA ligase (425 aa).

It belongs to the class-II aminoacyl-tRNA synthetase family. As to quaternary structure, homodimer.

The protein resides in the cytoplasm. It catalyses the reaction tRNA(His) + L-histidine + ATP = L-histidyl-tRNA(His) + AMP + diphosphate + H(+). The protein is Histidine--tRNA ligase of Shewanella sp. (strain ANA-3).